The sequence spans 61 residues: Protein translocase subunit SecE (61 aa).

A helical membrane pass occupies residues 39 to 59 (LGILVIGLVGMLIRIIGILML).

Belongs to the SecE/SEC61-gamma family. In terms of assembly, component of the Sec protein translocase complex. Heterotrimer consisting of SecY (alpha), SecG (beta) and SecE (gamma) subunits. The heterotrimers can form oligomers, although 1 heterotrimer is thought to be able to translocate proteins. Interacts with the ribosome. May interact with SecDF, and other proteins may be involved.

It is found in the cell membrane. Essential subunit of the Sec protein translocation channel SecYEG. Clamps together the 2 halves of SecY. May contact the channel plug during translocation. In Pyrococcus horikoshii (strain ATCC 700860 / DSM 12428 / JCM 9974 / NBRC 100139 / OT-3), this protein is Protein translocase subunit SecE.